The primary structure comprises 459 residues: tRNA modification GTPase MnmE (459 aa).

Residues Arg22, Glu85, and Arg124 each contribute to the (6S)-5-formyl-5,6,7,8-tetrahydrofolate site. Residues 221-380 (GLSTVIVGKP…LEIQIRDLFF (160 aa)) enclose the TrmE-type G domain. Position 231 (Asn231) interacts with K(+). Residues 231 to 236 (NVGKSS), 250 to 256 (TEVAGTT), and 275 to 278 (DTAG) each bind GTP. Ser235 contacts Mg(2+). K(+) contacts are provided by Thr250, Val252, and Thr255. Thr256 serves as a coordination point for Mg(2+). Residue Lys459 coordinates (6S)-5-formyl-5,6,7,8-tetrahydrofolate.

Belongs to the TRAFAC class TrmE-Era-EngA-EngB-Septin-like GTPase superfamily. TrmE GTPase family. As to quaternary structure, homodimer. Heterotetramer of two MnmE and two MnmG subunits. It depends on K(+) as a cofactor.

The protein localises to the cytoplasm. Functionally, exhibits a very high intrinsic GTPase hydrolysis rate. Involved in the addition of a carboxymethylaminomethyl (cmnm) group at the wobble position (U34) of certain tRNAs, forming tRNA-cmnm(5)s(2)U34. The polypeptide is tRNA modification GTPase MnmE (Staphylococcus aureus (strain MSSA476)).